A 141-amino-acid polypeptide reads, in one-letter code: Hemoglobin subunit alpha-1/2/3 (141 aa).

One can recognise a Globin domain in the interval 1–141 (VLSPADKTNV…VGTVLTSKYR (141 aa)). The residue at position 3 (Ser3) is a Phosphoserine. Lys7 is modified (N6-succinyllysine). Thr8 is subject to Phosphothreonine. An N6-succinyllysine modification is found at Lys11. Lys16 is subject to N6-acetyllysine; alternate. Residue Lys16 is modified to N6-succinyllysine; alternate. Tyr24 carries the phosphotyrosine modification. Phosphoserine is present on Ser35. Lys40 carries the N6-succinyllysine modification. At Ser49 the chain carries Phosphoserine. His58 is a binding site for O2. His87 is a heme b binding site. Ser102 is subject to Phosphoserine. At Thr108 the chain carries Phosphothreonine. Phosphoserine is present on residues Ser124 and Ser131. 2 positions are modified to phosphothreonine: Thr134 and Thr137. Position 138 is a phosphoserine (Ser138).

Belongs to the globin family. Heterotetramer of two alpha chains and two beta chains. As to expression, red blood cells.

Functionally, involved in oxygen transport from the lung to the various peripheral tissues. The polypeptide is Hemoglobin subunit alpha-1/2/3 (Macaca nemestrina (Pig-tailed macaque)).